The primary structure comprises 600 residues: Arginine--tRNA ligase (600 aa).

Residues 123–133 (PNVAKPMHVGH) carry the 'HIGH' region motif.

This sequence belongs to the class-I aminoacyl-tRNA synthetase family. Monomer.

It localises to the cytoplasm. The catalysed reaction is tRNA(Arg) + L-arginine + ATP = L-arginyl-tRNA(Arg) + AMP + diphosphate. In Caulobacter vibrioides (strain NA1000 / CB15N) (Caulobacter crescentus), this protein is Arginine--tRNA ligase.